A 144-amino-acid chain; its full sequence is Large ribosomal subunit protein uL11 (144 aa).

The protein belongs to the universal ribosomal protein uL11 family. As to quaternary structure, part of the ribosomal stalk of the 50S ribosomal subunit. Interacts with L10 and the large rRNA to form the base of the stalk. L10 forms an elongated spine to which L12 dimers bind in a sequential fashion forming a multimeric L10(L12)X complex. One or more lysine residues are methylated.

Functionally, forms part of the ribosomal stalk which helps the ribosome interact with GTP-bound translation factors. This is Large ribosomal subunit protein uL11 from Parafrankia sp. (strain EAN1pec).